The chain runs to 439 residues: 3-phosphoshikimate 1-carboxyvinyltransferase (439 aa).

2 residues coordinate 3-phosphoshikimate: Lys-29 and Arg-34. Lys-29 lines the phosphoenolpyruvate pocket. Residues Gly-99 and Arg-128 each coordinate phosphoenolpyruvate. Residues Ser-171, Ser-172, Gln-173, Ser-199, Asp-316, and Lys-343 each coordinate 3-phosphoshikimate. Gln-173 serves as a coordination point for phosphoenolpyruvate. Catalysis depends on Asp-316, which acts as the Proton acceptor. Phosphoenolpyruvate-binding residues include Arg-347, Arg-390, and Lys-416.

This sequence belongs to the EPSP synthase family. Monomer.

It is found in the cytoplasm. The catalysed reaction is 3-phosphoshikimate + phosphoenolpyruvate = 5-O-(1-carboxyvinyl)-3-phosphoshikimate + phosphate. It functions in the pathway metabolic intermediate biosynthesis; chorismate biosynthesis; chorismate from D-erythrose 4-phosphate and phosphoenolpyruvate: step 6/7. Catalyzes the transfer of the enolpyruvyl moiety of phosphoenolpyruvate (PEP) to the 5-hydroxyl of shikimate-3-phosphate (S3P) to produce enolpyruvyl shikimate-3-phosphate and inorganic phosphate. In Deinococcus radiodurans (strain ATCC 13939 / DSM 20539 / JCM 16871 / CCUG 27074 / LMG 4051 / NBRC 15346 / NCIMB 9279 / VKM B-1422 / R1), this protein is 3-phosphoshikimate 1-carboxyvinyltransferase.